We begin with the raw amino-acid sequence, 540 residues long: T-complex protein 1 subunit theta (540 aa).

This sequence belongs to the TCP-1 chaperonin family. In terms of assembly, heterooligomeric complex of about 850 to 900 kDa that forms two stacked rings, 12 to 16 nm in diameter.

The protein localises to the cytoplasm. Its function is as follows. Molecular chaperone; assists the folding of proteins upon ATP hydrolysis. Known to play a role, in vitro, in the folding of actin and tubulin. In yeast may play a role in mitotic spindle formation. The polypeptide is T-complex protein 1 subunit theta (CCT8) (Candida albicans (Yeast)).